We begin with the raw amino-acid sequence, 286 residues long: Nucleotide-binding protein HCH_05324 (286 aa).

An ATP-binding site is contributed by 8–15; it reads GRSGSGKS. 60–63 contacts GTP; that stretch reads DARN.

It belongs to the RapZ-like family.

Its function is as follows. Displays ATPase and GTPase activities. This chain is Nucleotide-binding protein HCH_05324, found in Hahella chejuensis (strain KCTC 2396).